The primary structure comprises 286 residues: Centromere protein P (286 aa).

Positions 1–73 (MDSETRELRA…RSEHSFLSKL (73 aa)) form a coiled coil. Ser-38 is subject to Phosphoserine.

Belongs to the CENP-P/CTF19 family. Component of the CENPA-CAD complex, composed of CENPI, CENPK, CENPL, CENPO, CENPP, CENPQ, CENPR and CENPS. The CENPA-CAD complex interacts with the CENPA-NAC complex, at least composed of CENPA, CENPC, CENPH, CENPM, CENPN, CENPT and CENPU.

It is found in the nucleus. The protein resides in the chromosome. The protein localises to the centromere. Component of the CENPA-CAD (nucleosome distal) complex, a complex recruited to centromeres which is involved in assembly of kinetochore proteins, mitotic progression and chromosome segregation. May be involved in incorporation of newly synthesized CENPA into centromeres via its interaction with the CENPA-NAC complex. The polypeptide is Centromere protein P (Cenpp) (Mus musculus (Mouse)).